The following is a 429-amino-acid chain: Formate-dependent phosphoribosylglycinamide formyltransferase (429 aa).

Residues 26–27 and Glu86 contribute to the N(1)-(5-phospho-beta-D-ribosyl)glycinamide site; that span reads EL. ATP is bound by residues Arg118, Lys159, 199-202, and Glu207; that span reads EEHI. Residues 123–319 enclose the ATP-grasp domain; that stretch reads ETLVKEAKVP…EFGLHLRAVL (197 aa). Residues Glu276 and Glu288 each coordinate Mg(2+). N(1)-(5-phospho-beta-D-ribosyl)glycinamide contacts are provided by residues Asp295, Lys375, and 382–383; that span reads RR.

This sequence belongs to the PurK/PurT family. As to quaternary structure, homodimer.

It carries out the reaction N(1)-(5-phospho-beta-D-ribosyl)glycinamide + formate + ATP = N(2)-formyl-N(1)-(5-phospho-beta-D-ribosyl)glycinamide + ADP + phosphate + H(+). Its pathway is purine metabolism; IMP biosynthesis via de novo pathway; N(2)-formyl-N(1)-(5-phospho-D-ribosyl)glycinamide from N(1)-(5-phospho-D-ribosyl)glycinamide (formate route): step 1/1. Involved in the de novo purine biosynthesis. Catalyzes the transfer of formate to 5-phospho-ribosyl-glycinamide (GAR), producing 5-phospho-ribosyl-N-formylglycinamide (FGAR). Formate is provided by PurU via hydrolysis of 10-formyl-tetrahydrofolate. In Pyrococcus furiosus (strain ATCC 43587 / DSM 3638 / JCM 8422 / Vc1), this protein is Formate-dependent phosphoribosylglycinamide formyltransferase.